Here is a 160-residue protein sequence, read N- to C-terminus: Phosphopantetheine adenylyltransferase (160 aa).

Ser8 contacts substrate. ATP contacts are provided by residues 8 to 9 (SF) and His16. Substrate-binding residues include Lys40, Leu73, and Lys87. ATP contacts are provided by residues 88-90 (GLR), Glu98, and 122-128 (YGYVSST).

This sequence belongs to the bacterial CoaD family. Homohexamer. The cofactor is Mg(2+).

It is found in the cytoplasm. The catalysed reaction is (R)-4'-phosphopantetheine + ATP + H(+) = 3'-dephospho-CoA + diphosphate. The protein operates within cofactor biosynthesis; coenzyme A biosynthesis; CoA from (R)-pantothenate: step 4/5. Functionally, reversibly transfers an adenylyl group from ATP to 4'-phosphopantetheine, yielding dephospho-CoA (dPCoA) and pyrophosphate. In Corynebacterium glutamicum (strain R), this protein is Phosphopantetheine adenylyltransferase.